The chain runs to 108 residues: Circadian clock oscillator protein KaiB (108 aa).

It belongs to the KaiB family. May undergo a major conformational rearrangment; in the free state forms homooligomers. When bound to KaiC switches to a monomeric thioredoxin-fold (KaiB(fs)). The active oscillator complex is probably KaiC(6):KaiB(6).

Its function is as follows. Component of the KaiBC clock protein complex, which constitutes the main circadian regulator in cyanobacteria; it may modify the ATPase activity of KaiC. Functionally, may be a metamorphic protein which reversibly switches between an inactive tetrameric fold and a rare, thioredoxin-like monomeric fold (KaiB(fs)). KaiB(fs) binds phospho-KaiC, and perhaps clock output effectors. In Prochlorococcus marinus (strain MIT 9515), this protein is Circadian clock oscillator protein KaiB.